A 227-amino-acid chain; its full sequence is Translation initiation factor 6 (227 aa).

Belongs to the eIF-6 family.

In terms of biological role, binds to the 50S ribosomal subunit and prevents its association with the 30S ribosomal subunit to form the 70S initiation complex. This is Translation initiation factor 6 from Methanococcus maripaludis (strain C5 / ATCC BAA-1333).